An 85-amino-acid chain; its full sequence is Large ribosomal subunit protein bL27 (85 aa).

It belongs to the bacterial ribosomal protein bL27 family.

This is Large ribosomal subunit protein bL27 from Pseudomonas aeruginosa (strain LESB58).